The chain runs to 336 residues: Holliday junction branch migration complex subunit RuvB (336 aa).

A large ATPase domain (RuvB-L) region spans residues 4–184 (ADRLVSADSS…FGIVQRLEFY (181 aa)). ATP is bound by residues Ile23, Arg24, Gly65, Lys68, Thr69, Thr70, 131–133 (EDY), Arg174, Tyr184, and Arg221. Thr69 is a binding site for Mg(2+). A small ATPAse domain (RuvB-S) region spans residues 185-255 (QIPDLQHIVS…IAAQALDMLN (71 aa)). Residues 258–336 (AEGFDYMDRK…HFGITPPEMP (79 aa)) form a head domain (RuvB-H) region. Arg294, Arg313, and Arg318 together coordinate DNA.

This sequence belongs to the RuvB family. As to quaternary structure, homohexamer. Forms an RuvA(8)-RuvB(12)-Holliday junction (HJ) complex. HJ DNA is sandwiched between 2 RuvA tetramers; dsDNA enters through RuvA and exits via RuvB. An RuvB hexamer assembles on each DNA strand where it exits the tetramer. Each RuvB hexamer is contacted by two RuvA subunits (via domain III) on 2 adjacent RuvB subunits; this complex drives branch migration. In the full resolvosome a probable DNA-RuvA(4)-RuvB(12)-RuvC(2) complex forms which resolves the HJ.

Its subcellular location is the cytoplasm. The enzyme catalyses ATP + H2O = ADP + phosphate + H(+). In terms of biological role, the RuvA-RuvB-RuvC complex processes Holliday junction (HJ) DNA during genetic recombination and DNA repair, while the RuvA-RuvB complex plays an important role in the rescue of blocked DNA replication forks via replication fork reversal (RFR). RuvA specifically binds to HJ cruciform DNA, conferring on it an open structure. The RuvB hexamer acts as an ATP-dependent pump, pulling dsDNA into and through the RuvAB complex. RuvB forms 2 homohexamers on either side of HJ DNA bound by 1 or 2 RuvA tetramers; 4 subunits per hexamer contact DNA at a time. Coordinated motions by a converter formed by DNA-disengaged RuvB subunits stimulates ATP hydrolysis and nucleotide exchange. Immobilization of the converter enables RuvB to convert the ATP-contained energy into a lever motion, pulling 2 nucleotides of DNA out of the RuvA tetramer per ATP hydrolyzed, thus driving DNA branch migration. The RuvB motors rotate together with the DNA substrate, which together with the progressing nucleotide cycle form the mechanistic basis for DNA recombination by continuous HJ branch migration. Branch migration allows RuvC to scan DNA until it finds its consensus sequence, where it cleaves and resolves cruciform DNA. The polypeptide is Holliday junction branch migration complex subunit RuvB (Klebsiella pneumoniae subsp. pneumoniae (strain ATCC 700721 / MGH 78578)).